Reading from the N-terminus, the 1211-residue chain is Sterol 3-beta-glucosyltransferase (1211 aa).

Residues Met1–Ser10 show a composition bias toward basic and acidic residues. Residues Met1 to Asp61 form a disordered region. Positions Glu196–Leu235 constitute a GRAM 1 domain. Positions Val248 to Phe347 constitute a PH domain. Disordered regions lie at residues Leu422 to Arg452 and Val500 to Trp531. The segment covering Thr423–Ser432 has biased composition (acidic residues). Residues Ser507–Ser525 are compositionally biased toward basic and acidic residues. Residues Ser586–Lys652 enclose the GRAM 2 domain. Ser770, Arg771, Asp773, Asn1046, Asn1072, Val1073, His1075, His1088, Ser1091, Gly1092, Thr1093, Asp1112, and Gln1113 together coordinate UDP-alpha-D-glucose.

It belongs to the glycosyltransferase 28 family.

It localises to the cytoplasm. Its subcellular location is the preautophagosomal structure membrane. It catalyses the reaction a sterol + UDP-alpha-D-glucose = a sterol 3-beta-D-glucoside + UDP + H(+). It carries out the reaction ergosterol + UDP-alpha-D-glucose = ergosteryl 3-beta-D-glucoside + UDP + H(+). Functionally, sterol glycosyltransferase responsible for the glycosylation of ergosterol to form ergosterol-glucoside. Shows also activity in vitro on other sterols such as cholesterol, beta-sitosterol, stigmasterol and tomatidine. Probable sterol 3-beta-glucosyltransferase that mediates autophagic degradation of peroxisomes (pexophagy). This is Sterol 3-beta-glucosyltransferase from Komagataella phaffii (strain GS115 / ATCC 20864) (Yeast).